The chain runs to 593 residues: Aspartate--tRNA(Asp/Asn) ligase (593 aa).

Glu172 contributes to the L-aspartate binding site. The aspartate stretch occupies residues 196–199 (QLFK). Arg218 is a binding site for L-aspartate. Residues 218-220 (RDE) and Gln227 each bind ATP. Residue His450 participates in L-aspartate binding. Residue Glu484 participates in ATP binding. Arg491 provides a ligand contact to L-aspartate. Residue 536-539 (GLDR) participates in ATP binding.

The protein belongs to the class-II aminoacyl-tRNA synthetase family. Type 1 subfamily. Homodimer.

The protein localises to the cytoplasm. The enzyme catalyses tRNA(Asx) + L-aspartate + ATP = L-aspartyl-tRNA(Asx) + AMP + diphosphate. Its function is as follows. Aspartyl-tRNA synthetase with relaxed tRNA specificity since it is able to aspartylate not only its cognate tRNA(Asp) but also tRNA(Asn). Reaction proceeds in two steps: L-aspartate is first activated by ATP to form Asp-AMP and then transferred to the acceptor end of tRNA(Asp/Asn). The polypeptide is Aspartate--tRNA(Asp/Asn) ligase (Nitrosomonas europaea (strain ATCC 19718 / CIP 103999 / KCTC 2705 / NBRC 14298)).